The following is a 223-amino-acid chain: Phage shock protein A homolog (223 aa).

A coiled-coil region spans residues 29 to 185; sequence IDQALRDMRS…AGMEDRNKAM (157 aa).

The protein belongs to the PspA/Vipp/IM30 family.

The polypeptide is Phage shock protein A homolog (Deinococcus radiodurans (strain ATCC 13939 / DSM 20539 / JCM 16871 / CCUG 27074 / LMG 4051 / NBRC 15346 / NCIMB 9279 / VKM B-1422 / R1)).